We begin with the raw amino-acid sequence, 97 residues long: DNA-binding protein NEQ150 (97 aa).

It belongs to the PDCD5 family.

This Nanoarchaeum equitans (strain Kin4-M) protein is DNA-binding protein NEQ150.